Here is a 79-residue protein sequence, read N- to C-terminus: Small ribosomal subunit protein bS18 (79 aa).

It belongs to the bacterial ribosomal protein bS18 family. In terms of assembly, part of the 30S ribosomal subunit. Forms a tight heterodimer with protein bS6.

Binds as a heterodimer with protein bS6 to the central domain of the 16S rRNA, where it helps stabilize the platform of the 30S subunit. This chain is Small ribosomal subunit protein bS18, found in Streptococcus pyogenes serotype M49 (strain NZ131).